The sequence spans 313 residues: Porphobilinogen deaminase (313 aa).

Cysteine 242 bears the S-(dipyrrolylmethanemethyl)cysteine mark.

It belongs to the HMBS family. In terms of assembly, monomer. Dipyrromethane is required as a cofactor.

It carries out the reaction 4 porphobilinogen + H2O = hydroxymethylbilane + 4 NH4(+). It participates in porphyrin-containing compound metabolism; protoporphyrin-IX biosynthesis; coproporphyrinogen-III from 5-aminolevulinate: step 2/4. Tetrapolymerization of the monopyrrole PBG into the hydroxymethylbilane pre-uroporphyrinogen in several discrete steps. The sequence is that of Porphobilinogen deaminase from Erwinia tasmaniensis (strain DSM 17950 / CFBP 7177 / CIP 109463 / NCPPB 4357 / Et1/99).